Here is a 131-residue protein sequence, read N- to C-terminus: D-ribose pyranase (131 aa).

The active-site Proton donor is His-20. Residues Asp-28, His-98, and 120 to 122 contribute to the substrate site; that span reads YAN.

Belongs to the RbsD / FucU family. RbsD subfamily. Homodecamer.

Its subcellular location is the cytoplasm. The catalysed reaction is beta-D-ribopyranose = beta-D-ribofuranose. It participates in carbohydrate metabolism; D-ribose degradation; D-ribose 5-phosphate from beta-D-ribopyranose: step 1/2. Functionally, catalyzes the interconversion of beta-pyran and beta-furan forms of D-ribose. The protein is D-ribose pyranase of Bacillus cereus (strain B4264).